Consider the following 250-residue polypeptide: Probable ABC transporter permease protein BAB2_1148 (250 aa).

The next 6 helical transmembrane spans lie at 12 to 32, 63 to 83, 94 to 114, 122 to 142, 172 to 192, and 211 to 231; these read LLSF…GAVV, VLSG…LMGW, WVQF…IVTL, IFVI…QGVI, VPFI…TVVA, and LYYD…LGLF. Residues 56–236 form the ABC transmembrane type-1 domain; sequence IFASLRRVLS…ILGLFMDRLL (181 aa).

Belongs to the binding-protein-dependent transport system permease family. As to quaternary structure, the complex is composed of two ATP-binding proteins (BAB2_1147), two transmembrane proteins (BAB2_1148) and a solute-binding protein (BAB2_1146).

It localises to the cell inner membrane. Its function is as follows. Probably part of an ABC transporter complex. Probably responsible for the translocation of the substrate across the membrane. The chain is Probable ABC transporter permease protein BAB2_1148 from Brucella abortus (strain 2308).